The following is a 158-amino-acid chain: 2-C-methyl-D-erythritol 2,4-cyclodiphosphate synthase (158 aa).

A divalent metal cation-binding residues include Asp9 and His11. Residues 9–11 and 35–36 contribute to the 4-CDP-2-C-methyl-D-erythritol 2-phosphate site; these read DVH and HS. His43 is an a divalent metal cation binding site. 4-CDP-2-C-methyl-D-erythritol 2-phosphate is bound by residues 57-59, 62-66, 101-107, 133-136, Phe140, and Arg143; these read DIG, FPDTD, AQKPKMA, and TTTE.

Belongs to the IspF family. As to quaternary structure, homotrimer. It depends on a divalent metal cation as a cofactor.

It carries out the reaction 4-CDP-2-C-methyl-D-erythritol 2-phosphate = 2-C-methyl-D-erythritol 2,4-cyclic diphosphate + CMP. Its pathway is isoprenoid biosynthesis; isopentenyl diphosphate biosynthesis via DXP pathway; isopentenyl diphosphate from 1-deoxy-D-xylulose 5-phosphate: step 4/6. Its function is as follows. Involved in the biosynthesis of isopentenyl diphosphate (IPP) and dimethylallyl diphosphate (DMAPP), two major building blocks of isoprenoid compounds. Catalyzes the conversion of 4-diphosphocytidyl-2-C-methyl-D-erythritol 2-phosphate (CDP-ME2P) to 2-C-methyl-D-erythritol 2,4-cyclodiphosphate (ME-CPP) with a corresponding release of cytidine 5-monophosphate (CMP). The protein is 2-C-methyl-D-erythritol 2,4-cyclodiphosphate synthase of Bacillus velezensis (strain DSM 23117 / BGSC 10A6 / LMG 26770 / FZB42) (Bacillus amyloliquefaciens subsp. plantarum).